A 730-amino-acid chain; its full sequence is Phosphoribosylformylglycinamidine synthase subunit PurL (730 aa).

The active site involves H44. ATP-binding residues include Y47 and K86. E88 is a Mg(2+) binding site. Residues 89-92 (SHNH) and R111 contribute to the substrate site. The active-site Proton acceptor is H90. D112 is a Mg(2+) binding site. Position 235 (Q235) interacts with substrate. Position 263 (D263) interacts with Mg(2+). Position 307–309 (307–309 (ESQ)) interacts with substrate. Positions 489 and 526 each coordinate ATP. N527 lines the Mg(2+) pocket. Residue S529 participates in substrate binding.

The protein belongs to the FGAMS family. In terms of assembly, monomer. Part of the FGAM synthase complex composed of 1 PurL, 1 PurQ and 2 PurS subunits.

Its subcellular location is the cytoplasm. It catalyses the reaction N(2)-formyl-N(1)-(5-phospho-beta-D-ribosyl)glycinamide + L-glutamine + ATP + H2O = 2-formamido-N(1)-(5-O-phospho-beta-D-ribosyl)acetamidine + L-glutamate + ADP + phosphate + H(+). The protein operates within purine metabolism; IMP biosynthesis via de novo pathway; 5-amino-1-(5-phospho-D-ribosyl)imidazole from N(2)-formyl-N(1)-(5-phospho-D-ribosyl)glycinamide: step 1/2. Its function is as follows. Part of the phosphoribosylformylglycinamidine synthase complex involved in the purines biosynthetic pathway. Catalyzes the ATP-dependent conversion of formylglycinamide ribonucleotide (FGAR) and glutamine to yield formylglycinamidine ribonucleotide (FGAM) and glutamate. The FGAM synthase complex is composed of three subunits. PurQ produces an ammonia molecule by converting glutamine to glutamate. PurL transfers the ammonia molecule to FGAR to form FGAM in an ATP-dependent manner. PurS interacts with PurQ and PurL and is thought to assist in the transfer of the ammonia molecule from PurQ to PurL. In Pelagibacter ubique (strain HTCC1062), this protein is Phosphoribosylformylglycinamidine synthase subunit PurL.